Reading from the N-terminus, the 333-residue chain is 4-hydroxy-3-methylbut-2-enyl diphosphate reductase (333 aa).

Cys-34 contributes to the [4Fe-4S] cluster binding site. (2E)-4-hydroxy-3-methylbut-2-enyl diphosphate is bound by residues His-63 and His-96. His-63 and His-96 together coordinate dimethylallyl diphosphate. His-63 and His-96 together coordinate isopentenyl diphosphate. Residue Cys-118 coordinates [4Fe-4S] cluster. His-146 is a (2E)-4-hydroxy-3-methylbut-2-enyl diphosphate binding site. His-146 contacts dimethylallyl diphosphate. Isopentenyl diphosphate is bound at residue His-146. Residue Glu-148 is the Proton donor of the active site. Residue Thr-186 coordinates (2E)-4-hydroxy-3-methylbut-2-enyl diphosphate. [4Fe-4S] cluster is bound at residue Cys-216. The (2E)-4-hydroxy-3-methylbut-2-enyl diphosphate site is built by Ser-244, Ser-245, Asn-246, and Ser-289. Dimethylallyl diphosphate is bound by residues Ser-244, Ser-245, Asn-246, and Ser-289. Residues Ser-244, Ser-245, Asn-246, and Ser-289 each coordinate isopentenyl diphosphate.

The protein belongs to the IspH family. It depends on [4Fe-4S] cluster as a cofactor.

It catalyses the reaction isopentenyl diphosphate + 2 oxidized [2Fe-2S]-[ferredoxin] + H2O = (2E)-4-hydroxy-3-methylbut-2-enyl diphosphate + 2 reduced [2Fe-2S]-[ferredoxin] + 2 H(+). It carries out the reaction dimethylallyl diphosphate + 2 oxidized [2Fe-2S]-[ferredoxin] + H2O = (2E)-4-hydroxy-3-methylbut-2-enyl diphosphate + 2 reduced [2Fe-2S]-[ferredoxin] + 2 H(+). Its pathway is isoprenoid biosynthesis; dimethylallyl diphosphate biosynthesis; dimethylallyl diphosphate from (2E)-4-hydroxy-3-methylbutenyl diphosphate: step 1/1. It functions in the pathway isoprenoid biosynthesis; isopentenyl diphosphate biosynthesis via DXP pathway; isopentenyl diphosphate from 1-deoxy-D-xylulose 5-phosphate: step 6/6. In terms of biological role, catalyzes the conversion of 1-hydroxy-2-methyl-2-(E)-butenyl 4-diphosphate (HMBPP) into a mixture of isopentenyl diphosphate (IPP) and dimethylallyl diphosphate (DMAPP). Acts in the terminal step of the DOXP/MEP pathway for isoprenoid precursor biosynthesis. The protein is 4-hydroxy-3-methylbut-2-enyl diphosphate reductase of Mycolicibacterium gilvum (strain PYR-GCK) (Mycobacterium gilvum (strain PYR-GCK)).